Consider the following 128-residue polypeptide: Small ribosomal subunit protein uS8c (128 aa).

Belongs to the universal ribosomal protein uS8 family. As to quaternary structure, part of the 30S ribosomal subunit.

It is found in the plastid. Its subcellular location is the chloroplast. One of the primary rRNA binding proteins, it binds directly to 16S rRNA central domain where it helps coordinate assembly of the platform of the 30S subunit. In Welwitschia mirabilis (Tree tumbo), this protein is Small ribosomal subunit protein uS8c (rps8).